A 652-amino-acid chain; its full sequence is Sodium-dependent phosphate transporter 2 (652 aa).

Residues 1–5 are Extracellular-facing; that stretch reads MAMDE. The helical transmembrane segment at 6–26 threads the bilayer; that stretch reads YLWMVILGFIIAFILAFSVGA. Topologically, residues 27 to 46 are cytoplasmic; it reads NDVANSFGTAVGSGVVTLRQ. A helical membrane pass occupies residues 47-67; that stretch reads ACILASIFETTGSVLLGAKVG. The Extracellular portion of the chain corresponds to 68–86; it reads ETIRKGIIDVNLYNETVET. Asn-81 carries an N-linked (GlcNAc...) asparagine glycan. A helical membrane pass occupies residues 87 to 107; the sequence is LMAGEVSAMVGSAVWQLIASF. Topologically, residues 108–109 are cytoplasmic; the sequence is LR. A helical membrane pass occupies residues 110–130; that stretch reads LPISGTHCIVGSTIGFSLVAI. At 131–142 the chain is on the extracellular side; the sequence is GTKGVQWMELVK. Residues 143–163 form a helical membrane-spanning segment; it reads IVASWFISPLLSGFMSGLLFV. Residues 164–190 lie on the Cytoplasmic side of the membrane; sequence LIRIFILKKEDPVPNGLRALPVFYAAT. A helical transmembrane segment spans residues 191-211; sequence IAINVFSIMYTGAPVLGLVLP. The Extracellular segment spans residues 212–213; it reads MW. Residues 214–234 form a helical membrane-spanning segment; it reads AIALISFGVALLFAFFVWLFV. The Cytoplasmic portion of the chain corresponds to 235–482; sequence CPWMRRKITG…EEKEEKDAPE (248 aa). Phosphoserine is present on residues Ser-253, Ser-256, Ser-259, and Ser-268. Residues 273–307 are disordered; it reads ELPGAKANDDSTIPLTGAAGETLGTSEGTSAGSHP. Residues 295 to 304 show a composition bias toward polar residues; that stretch reads LGTSEGTSAG. Ser-316 and Ser-385 each carry phosphoserine. A disordered region spans residues 458–477; the sequence is SELADPDQPREDPAEEEKEE. The chain crosses the membrane as a helical span at residues 483 to 503; that stretch reads VHLLFHFLQVLTACFGSFAHG. The Extracellular portion of the chain corresponds to 504–530; that stretch reads GNDVSNAIGPLVALWLIYKQGGVTQEA. The chain crosses the membrane as a helical span at residues 531–551; sequence ATPVWLLFYGGVGICTGLWVW. Residues 552-571 are Cytoplasmic-facing; it reads GRRVIQTMGKDLTPITPSSG. The chain crosses the membrane as a helical span at residues 572–586; sequence FTIELASAFTVVIAS. At 587–593 the chain is on the extracellular side; the sequence is NIGLPVS. Residues 594–609 traverse the membrane as a helical segment; that stretch reads TTHCKVGSVVAVGWIR. At 610–621 the chain is on the cytoplasmic side; sequence SRKAVDWRLFRN. The helical transmembrane segment at 622–642 threads the bilayer; sequence IFVAWFVTVPVAGLFSAAVMA. Over 643–652 the chain is Extracellular; it reads LLMYGILPYV.

The protein belongs to the inorganic phosphate transporter (PiT) (TC 2.A.20) family. As to quaternary structure, homodimer. In terms of tissue distribution, ubiquitously expressed.

It is found in the cell membrane. The protein localises to the apical cell membrane. The enzyme catalyses 2 Na(+)(out) + phosphate(out) = 2 Na(+)(in) + phosphate(in). Sodium-phosphate symporter which preferentially transports the monovalent form of phosphate with a stoichiometry of two sodium ions per phosphate ion. Plays a critical role in the determination of bone quality and strength by providing phosphate for bone mineralization. Required to maintain normal cerebrospinal fluid phosphate levels. Mediates phosphate-induced calcification of vascular smooth muscle cells (VCMCs) and can functionally compensate for loss of SLC20A1 in VCMCs. Functionally, (Microbial infection) Functions as a retroviral receptor and confers human cells susceptibility to infection to amphotropic murine leukemia virus (A-MuLV), 10A1 murine leukemia virus (10A1 MLV) and some feline leukemia virus subgroup B (FeLV-B) variants. This Homo sapiens (Human) protein is Sodium-dependent phosphate transporter 2 (SLC20A2).